A 632-amino-acid polypeptide reads, in one-letter code: Chaperone protein HtpG (632 aa).

The interval 1-339 (MAHETMSFQA…SADLPLNVSR (339 aa)) is a; substrate-binding. Residues 340-559 (EILQESRDVK…DNDMSGYLQR (220 aa)) form a b region. The segment at 560-632 (MLKAAGQNAP…TNALLLSRAA (73 aa)) is c.

The protein belongs to the heat shock protein 90 family. Homodimer.

Its subcellular location is the cytoplasm. Its function is as follows. Molecular chaperone. Has ATPase activity. The protein is Chaperone protein HtpG of Burkholderia ambifaria (strain ATCC BAA-244 / DSM 16087 / CCUG 44356 / LMG 19182 / AMMD) (Burkholderia cepacia (strain AMMD)).